Consider the following 468-residue polypeptide: Hexokinase (468 aa).

One can recognise a Hexokinase domain in the interval 10 to 466 (AKQLAELEVV…SGKGAALIAD (457 aa)). A hexokinase small subdomain region spans residues 74–225 (TGAEVGEAYA…NVPAVCKAIV (152 aa)). Position 85-90 (85-90 (DFGGST)) interacts with ATP. Residues 163 to 189 (PVGFTFSFPCAQAALNSSFLIEWTKGF) form a glucose-binding region. The tract at residues 226–455 (NDTVGTLVSC…KNIHYCIADD (230 aa)) is hexokinase large subdomain.

Belongs to the hexokinase family.

The enzyme catalyses a D-hexose + ATP = a D-hexose 6-phosphate + ADP + H(+). The catalysed reaction is D-mannose + ATP = D-mannose 6-phosphate + ADP + H(+). It catalyses the reaction D-fructose + ATP = D-fructose 6-phosphate + ADP + H(+). It carries out the reaction D-glucose + ATP = D-glucose 6-phosphate + ADP + H(+). It participates in carbohydrate metabolism; hexose metabolism. It functions in the pathway carbohydrate degradation; glycolysis; D-glyceraldehyde 3-phosphate and glycerone phosphate from D-glucose: step 1/4. Functionally, catalyzes the phosphorylation of various hexoses to hexose 6-phosphate. The chain is Hexokinase (HXK) from Toxoplasma gondii.